The following is a 573-amino-acid chain: 60 kDa heat shock protein, mitochondrial (573 aa).

The transit peptide at 1 to 26 (MLRLPAVLRQIRPVSRALAPHLTRAY) directs the protein to the mitochondrion. Residues lysine 75 and 111–115 (DGTTT) contribute to the ATP site. A Phosphotyrosine modification is found at tyrosine 227. ATP is bound by residues glycine 440 and aspartate 520.

It localises to the mitochondrion matrix. It catalyses the reaction ATP + H2O + a folded polypeptide = ADP + phosphate + an unfolded polypeptide.. Its function is as follows. Chaperonin implicated in mitochondrial protein import and macromolecular assembly. Together with Hsp10, facilitates the correct folding of imported proteins. May also prevent misfolding and promote the refolding and proper assembly of unfolded polypeptides generated under stress conditions in the mitochondrial matrix. The functional units of these chaperonins consist of heptameric rings of the large subunit Hsp60, which function as a back-to-back double ring. In a cyclic reaction, Hsp60 ring complexes bind one unfolded substrate protein per ring, followed by the binding of ATP and association with 2 heptameric rings of the co-chaperonin Hsp10. This leads to sequestration of the substrate protein in the inner cavity of Hsp60 where, for a certain period of time, it can fold undisturbed by other cell components. Synchronous hydrolysis of ATP in all Hsp60 subunits results in the dissociation of the chaperonin rings and the release of ADP and the folded substrate protein. The protein is 60 kDa heat shock protein, mitochondrial of Gallus gallus (Chicken).